An 852-amino-acid polypeptide reads, in one-letter code: DNA mismatch repair protein MutS (852 aa).

ATP is bound at residue 615–622 (GPNMAGKS).

It belongs to the DNA mismatch repair MutS family.

In terms of biological role, this protein is involved in the repair of mismatches in DNA. It is possible that it carries out the mismatch recognition step. This protein has a weak ATPase activity. The chain is DNA mismatch repair protein MutS from Thermodesulfovibrio yellowstonii (strain ATCC 51303 / DSM 11347 / YP87).